Reading from the N-terminus, the 258-residue chain is Global transcriptional regulator CodY (258 aa).

The tract at residues 1–156 (MSSLLSKTRR…SATIVGMEML (156 aa)) is GAF domain. Residues 204 to 223 (ASKIADKVGITRSVIVNALR) constitute a DNA-binding region (H-T-H motif).

The protein belongs to the CodY family.

The protein resides in the cytoplasm. DNA-binding global transcriptional regulator which is involved in the adaptive response to starvation and acts by directly or indirectly controlling the expression of numerous genes in response to nutrient availability. During rapid exponential growth, CodY is highly active and represses genes whose products allow adaptation to nutrient depletion. This chain is Global transcriptional regulator CodY, found in Clostridium botulinum (strain Eklund 17B / Type B).